Reading from the N-terminus, the 222-residue chain is Pyridoxine/pyridoxamine 5'-phosphate oxidase (222 aa).

Residues 69–74 (RMVLLK), 84–85 (YT), K91, and Q113 contribute to the FMN site. Position 74 (K74) interacts with substrate. Positions 131, 135, and 139 each coordinate substrate. FMN-binding positions include 148–149 (QS) and W193. 199–201 (RLH) contacts substrate. An FMN-binding site is contributed by R203.

This sequence belongs to the pyridoxamine 5'-phosphate oxidase family. As to quaternary structure, homodimer. FMN serves as cofactor.

The enzyme catalyses pyridoxamine 5'-phosphate + O2 + H2O = pyridoxal 5'-phosphate + H2O2 + NH4(+). The catalysed reaction is pyridoxine 5'-phosphate + O2 = pyridoxal 5'-phosphate + H2O2. It participates in cofactor metabolism; pyridoxal 5'-phosphate salvage; pyridoxal 5'-phosphate from pyridoxamine 5'-phosphate: step 1/1. Its pathway is cofactor metabolism; pyridoxal 5'-phosphate salvage; pyridoxal 5'-phosphate from pyridoxine 5'-phosphate: step 1/1. Its function is as follows. Catalyzes the oxidation of either pyridoxine 5'-phosphate (PNP) or pyridoxamine 5'-phosphate (PMP) into pyridoxal 5'-phosphate (PLP). The sequence is that of Pyridoxine/pyridoxamine 5'-phosphate oxidase from Maricaulis maris (strain MCS10) (Caulobacter maris).